A 76-amino-acid chain; its full sequence is Exodeoxyribonuclease 7 small subunit (76 aa).

The protein belongs to the XseB family. Heterooligomer composed of large and small subunits.

It is found in the cytoplasm. The enzyme catalyses Exonucleolytic cleavage in either 5'- to 3'- or 3'- to 5'-direction to yield nucleoside 5'-phosphates.. In terms of biological role, bidirectionally degrades single-stranded DNA into large acid-insoluble oligonucleotides, which are then degraded further into small acid-soluble oligonucleotides. The polypeptide is Exodeoxyribonuclease 7 small subunit (Latilactobacillus sakei subsp. sakei (strain 23K) (Lactobacillus sakei subsp. sakei)).